Here is a 584-residue protein sequence, read N- to C-terminus: UvrABC system protein C (584 aa).

Positions 12–89 constitute a GIY-YIG domain; it reads NKPGCYLFLN…IKKYRPKYNV (78 aa). The UVR domain occupies 194 to 229; sequence NQVKQTLVKQMQKASDNLQFEQAKRIKDQITSLDFI.

This sequence belongs to the UvrC family. In terms of assembly, interacts with UvrB in an incision complex.

It is found in the cytoplasm. Functionally, the UvrABC repair system catalyzes the recognition and processing of DNA lesions. UvrC both incises the 5' and 3' sides of the lesion. The N-terminal half is responsible for the 3' incision and the C-terminal half is responsible for the 5' incision. The chain is UvrABC system protein C from Mycoplasma capricolum subsp. capricolum (strain California kid / ATCC 27343 / NCTC 10154).